A 166-amino-acid polypeptide reads, in one-letter code: ATP synthase subunit b (166 aa).

Residues 8–28 traverse the membrane as a helical segment; it reads FSFGLFFWQALILVILILLLV.

It belongs to the ATPase B chain family. In terms of assembly, F-type ATPases have 2 components, F(1) - the catalytic core - and F(0) - the membrane proton channel. F(1) has five subunits: alpha(3), beta(3), gamma(1), delta(1), epsilon(1). F(0) has three main subunits: a(1), b(2) and c(10-14). The alpha and beta chains form an alternating ring which encloses part of the gamma chain. F(1) is attached to F(0) by a central stalk formed by the gamma and epsilon chains, while a peripheral stalk is formed by the delta and b chains.

The protein localises to the cell inner membrane. F(1)F(0) ATP synthase produces ATP from ADP in the presence of a proton or sodium gradient. F-type ATPases consist of two structural domains, F(1) containing the extramembraneous catalytic core and F(0) containing the membrane proton channel, linked together by a central stalk and a peripheral stalk. During catalysis, ATP synthesis in the catalytic domain of F(1) is coupled via a rotary mechanism of the central stalk subunits to proton translocation. In terms of biological role, component of the F(0) channel, it forms part of the peripheral stalk, linking F(1) to F(0). In Flavobacterium johnsoniae (strain ATCC 17061 / DSM 2064 / JCM 8514 / BCRC 14874 / CCUG 350202 / NBRC 14942 / NCIMB 11054 / UW101) (Cytophaga johnsonae), this protein is ATP synthase subunit b.